The chain runs to 531 residues: CCA tRNA nucleotidyltransferase, mitochondrial (531 aa).

This sequence belongs to the tRNA nucleotidyltransferase/poly(A) polymerase family.

The protein resides in the mitochondrion. Its subcellular location is the cytoplasm. It is found in the nucleus. The catalysed reaction is a tRNA precursor + 2 CTP + ATP = a tRNA with a 3' CCA end + 3 diphosphate. Nucleotidyltransferase that catalyzes the addition and repair of the essential 3'-terminal CCA sequence in tRNAs, which is necessary for the attachment of amino acids to the 3' terminus of tRNA molecules, using CTP and ATP as substrates. tRNA 3'-terminal CCA addition is required both for tRNA processing and repair. Also involved in tRNA surveillance by mediating tandem CCA addition to generate a CCACCA at the 3' terminus of unstable tRNAs. While stable tRNAs receive only 3'-terminal CCA, unstable tRNAs are marked with CCACCA and rapidly degraded. The structural flexibility of RNA controls the choice between CCA versus CCACCA addition: following the first CCA addition cycle, nucleotide-binding to the active site triggers a clockwise screw motion, producing torque on the RNA. This ejects stable RNAs, whereas unstable RNAs are refolded while bound to the enzyme and subjected to a second CCA catalytic cycle. The chain is CCA tRNA nucleotidyltransferase, mitochondrial (CCA1) from Candida glabrata (strain ATCC 2001 / BCRC 20586 / JCM 3761 / NBRC 0622 / NRRL Y-65 / CBS 138) (Yeast).